Consider the following 418-residue polypeptide: UDP-N-acetylglucosamine 1-carboxyvinyltransferase (418 aa).

Position 22–23 (22–23) interacts with phosphoenolpyruvate; sequence KN. Arg93 serves as a coordination point for UDP-N-acetyl-alpha-D-glucosamine. Cys117 functions as the Proton donor in the catalytic mechanism. Cys117 carries the post-translational modification 2-(S-cysteinyl)pyruvic acid O-phosphothioketal. UDP-N-acetyl-alpha-D-glucosamine contacts are provided by Asp306 and Ile328.

The protein belongs to the EPSP synthase family. MurA subfamily.

It is found in the cytoplasm. The catalysed reaction is phosphoenolpyruvate + UDP-N-acetyl-alpha-D-glucosamine = UDP-N-acetyl-3-O-(1-carboxyvinyl)-alpha-D-glucosamine + phosphate. It participates in cell wall biogenesis; peptidoglycan biosynthesis. Functionally, cell wall formation. Adds enolpyruvyl to UDP-N-acetylglucosamine. The sequence is that of UDP-N-acetylglucosamine 1-carboxyvinyltransferase from Hydrogenovibrio crunogenus (strain DSM 25203 / XCL-2) (Thiomicrospira crunogena).